A 361-amino-acid polypeptide reads, in one-letter code: 3-isopropylmalate dehydrogenase (361 aa).

78–91 (GTQWDSLPRHLRPE) serves as a coordination point for NAD(+). Substrate is bound by residues R98, R108, R136, and D226. 3 residues coordinate Mg(2+): D226, D250, and D254. 284 to 296 (GSAPDIAGQDKAN) provides a ligand contact to NAD(+).

The protein belongs to the isocitrate and isopropylmalate dehydrogenases family. LeuB type 1 subfamily. As to quaternary structure, homodimer. Requires Mg(2+) as cofactor. Mn(2+) is required as a cofactor.

It is found in the cytoplasm. The catalysed reaction is (2R,3S)-3-isopropylmalate + NAD(+) = 4-methyl-2-oxopentanoate + CO2 + NADH. Its pathway is amino-acid biosynthesis; L-leucine biosynthesis; L-leucine from 3-methyl-2-oxobutanoate: step 3/4. In terms of biological role, catalyzes the oxidation of 3-carboxy-2-hydroxy-4-methylpentanoate (3-isopropylmalate) to 3-carboxy-4-methyl-2-oxopentanoate. The product decarboxylates to 4-methyl-2 oxopentanoate. This is 3-isopropylmalate dehydrogenase from Thermosynechococcus vestitus (strain NIES-2133 / IAM M-273 / BP-1).